Consider the following 244-residue polypeptide: tRNA1(Val) (adenine(37)-N6)-methyltransferase (244 aa).

The protein belongs to the methyltransferase superfamily. tRNA (adenine-N(6)-)-methyltransferase family.

The protein resides in the cytoplasm. It catalyses the reaction adenosine(37) in tRNA1(Val) + S-adenosyl-L-methionine = N(6)-methyladenosine(37) in tRNA1(Val) + S-adenosyl-L-homocysteine + H(+). Specifically methylates the adenine in position 37 of tRNA(1)(Val) (anticodon cmo5UAC). This Shewanella sediminis (strain HAW-EB3) protein is tRNA1(Val) (adenine(37)-N6)-methyltransferase.